The sequence spans 363 residues: Methyltransferase pynC (363 aa).

S-adenosyl-L-methionine contacts are provided by residues 199 to 200, D225, 254 to 255, R270, and R271; these read GG and SF.

It belongs to the class I-like SAM-binding methyltransferase superfamily. Cation-independent O-methyltransferase family.

It functions in the pathway secondary metabolite biosynthesis. Functionally, methyltransferase; part of the gene cluster that mediates the biosynthesis of pyranonigrins, a family of antioxidative compounds. The first step of pyranonigrins biosynthesis is performed by the hybrid PKS-NRPS synthetase that condenses 6 malonyl-CoA units to an acetyl starter unit, to form a 1,3,5-trioxotetradecane-6,8-dienyl-ACP. The enoyl reductase (ER) domain of pynA is likely to be functional during the first two rounds of polyketide chain extension, to generate the saturated C-C bonds of the alkyl side chain. PynA subsequently forms the amide bond between the acyl chain and L-serine. Although pynA has a terminal reductase domain, it appears to require the thioesterase pynI for the release of the straight-chain intermediate from pynA via the formation of a tetramic acid pyranonigrin J. The methyltransferase pynC then coverts pyranonigrin J to pyranonigrin I via N-methylation. The FAD-dependent monooxygenase pynG catalyzes an epoxidation-mediated cyclization to form the dihydro-gamma-pyrone moiety, followed by pynD-catalyzed oxidation of the alcohol to the ketone and enolization to yield the characteristic tetramic acid-fused gamma-pyrone core of pyranonigrin H. Pyranonigrin H is substrate of pynH for dehydration-mediated exo-methylene formation from the serine side chain to produce pyranonigrin E, before the oxidase pynE reduces the exo-methylene of pyranonigrin E into a pendant methyl to form pyranonigrin G. The FAD-linked oxidoreductase pynB performs the reverse reaction and converts pyranonigrin G back to pyranonigrin E. This chain is Methyltransferase pynC, found in Aspergillus niger (strain ATCC MYA-4892 / CBS 513.88 / FGSC A1513).